The chain runs to 301 residues: tRNA uridine(34) hydroxylase (301 aa).

The Rhodanese domain maps to 121–212; sequence NDKDTLVLDS…YLKNIKKKES (92 aa). The active-site Cysteine persulfide intermediate is the Cys172.

The protein belongs to the TrhO family.

It catalyses the reaction uridine(34) in tRNA + AH2 + O2 = 5-hydroxyuridine(34) in tRNA + A + H2O. Catalyzes oxygen-dependent 5-hydroxyuridine (ho5U) modification at position 34 in tRNAs. The protein is tRNA uridine(34) hydroxylase of Pelagibacter ubique (strain HTCC1062).